We begin with the raw amino-acid sequence, 243 residues long: LexA repressor (243 aa).

The segment at 1-30 (MSDDTGEFTDGSTESPADADGAGRRRAVDN) is disordered. Over residues 21-30 (GAGRRRAVDN) the composition is skewed to basic and acidic residues. The segment at residues 56 to 76 (IREIGDAVGLTSTSSVAHQLR) is a DNA-binding region (H-T-H motif). Residues Ser-167 and Lys-204 each act as for autocatalytic cleavage activity in the active site.

It belongs to the peptidase S24 family. As to quaternary structure, homodimer.

It carries out the reaction Hydrolysis of Ala-|-Gly bond in repressor LexA.. Its function is as follows. Represses a number of genes involved in the response to DNA damage (SOS response), including recA and lexA. In the presence of single-stranded DNA, RecA interacts with LexA causing an autocatalytic cleavage which disrupts the DNA-binding part of LexA, leading to derepression of the SOS regulon and eventually DNA repair. In Mycolicibacterium smegmatis (strain ATCC 700084 / mc(2)155) (Mycobacterium smegmatis), this protein is LexA repressor.